Reading from the N-terminus, the 276-residue chain is Putative pyruvate, phosphate dikinase regulatory protein 2 (276 aa).

146–153 (GVSRTSKT) contributes to the ADP binding site.

The protein belongs to the pyruvate, phosphate/water dikinase regulatory protein family. PDRP subfamily.

The enzyme catalyses N(tele)-phospho-L-histidyl/L-threonyl-[pyruvate, phosphate dikinase] + ADP = N(tele)-phospho-L-histidyl/O-phospho-L-threonyl-[pyruvate, phosphate dikinase] + AMP + H(+). The catalysed reaction is N(tele)-phospho-L-histidyl/O-phospho-L-threonyl-[pyruvate, phosphate dikinase] + phosphate + H(+) = N(tele)-phospho-L-histidyl/L-threonyl-[pyruvate, phosphate dikinase] + diphosphate. Its function is as follows. Bifunctional serine/threonine kinase and phosphorylase involved in the regulation of the pyruvate, phosphate dikinase (PPDK) by catalyzing its phosphorylation/dephosphorylation. In Enterococcus faecalis (strain ATCC 700802 / V583), this protein is Putative pyruvate, phosphate dikinase regulatory protein 2.